Consider the following 172-residue polypeptide: Propanediol dehydratase small subunit (172 aa).

It belongs to the diol/glycerol dehydratase small subunit family. The propanediol dehydratase enzyme is a heterotrimeric complex composed of a large (PduC), a medium (PduD) and a small (PduE) subunit. Requires adenosylcob(III)alamin as cofactor.

Its subcellular location is the bacterial microcompartment. It catalyses the reaction propane-1,2-diol = propanal + H2O. It participates in polyol metabolism; 1,2-propanediol degradation. Its function is as follows. Part of the PduCDE complex that catalyzes the dehydration of 1,2-propanediol (1,2-PD) to propionaldehyde. Localized in the bacterial microcompartment (BMC) dedicated to 1,2-PD degradation. In terms of biological role, expression of a cosmid containing the full 21-gene pdu operon in E.coli allows E.coli to grow on 1,2-propanediol (1,2-PD) with the appearance of BMCs in its cytoplasm. Functionally, the 1,2-PD-specific bacterial microcompartment (BMC) concentrates low levels of 1,2-PD catabolic enzymes, concentrates volatile reaction intermediates thus enhancing pathway flux and keeps the level of toxic, mutagenic propionaldehyde low. This chain is Propanediol dehydratase small subunit, found in Citrobacter freundii.